The following is a 227-amino-acid chain: Cytochrome c biogenesis ATP-binding export protein CcmA (227 aa).

An ABC transporter domain is found at 26–227 (LAASGLGFSR…ARTLRLDARS (202 aa)). 58 to 65 (GANGSGKT) provides a ligand contact to ATP.

This sequence belongs to the ABC transporter superfamily. CcmA exporter (TC 3.A.1.107) family. The complex is composed of two ATP-binding proteins (CcmA) and two transmembrane proteins (CcmB).

Its subcellular location is the cell inner membrane. The enzyme catalyses heme b(in) + ATP + H2O = heme b(out) + ADP + phosphate + H(+). Part of the ABC transporter complex CcmAB involved in the biogenesis of c-type cytochromes; once thought to export heme, this seems not to be the case, but its exact role is uncertain. Responsible for energy coupling to the transport system. This chain is Cytochrome c biogenesis ATP-binding export protein CcmA, found in Cupriavidus necator (strain ATCC 17699 / DSM 428 / KCTC 22496 / NCIMB 10442 / H16 / Stanier 337) (Ralstonia eutropha).